The following is a 197-amino-acid chain: CASP-like protein 1B2 (197 aa).

Alanine 2 carries the post-translational modification N-acetylalanine. Residues 2–17 (AREKIVVAGGSTKSWK) are Cytoplasmic-facing. Residues 18 to 38 (LLLGLRVFAFMATLAAAIVMS) form a helical membrane-spanning segment. The Extracellular portion of the chain corresponds to 39-69 (LNKETKTLVVATIGTLPIKATLTAKFQDTPA). Residues 70–90 (FVFFVIANVMVSFHNLLMIVL) form a helical membrane-spanning segment. Residues 91–106 (QIFSRKLEYKGVRLLS) are Cytoplasmic-facing. Residues 107-127 (IAILDMLNATLVSAAANAAVF) traverse the membrane as a helical segment. The Extracellular segment spans residues 128–156 (VAELGKNGNKHAKWNKVCDRFATYCDHGA). Residues 157 to 177 (GALIAAFAGVILMLLVSSVSI) form a helical membrane-spanning segment. Over 178 to 197 (SRLLINSKHLSTTATTTAVV) the chain is Cytoplasmic.

This sequence belongs to the Casparian strip membrane proteins (CASP) family. In terms of assembly, homodimer and heterodimers.

It localises to the cell membrane. The protein is CASP-like protein 1B2 of Arabidopsis lyrata subsp. lyrata (Lyre-leaved rock-cress).